A 300-amino-acid chain; its full sequence is MNDTTATRCGYVAIVGRPNVGKSTLLNHILGQKLAITSRKPQTTRHNMLGIKTEGAVQAIYVDTPGMHKNGEKALNRYMNKTASAALKDVDVVIFVVDRTRWTDEDQMVLERVQYVQGPVILAINKTDRIEDKSDLMPHLEWLQGQLPNASIVPISAQHGHNLEALESLIASHLPENDHFFPEDQITDRSSRFLAAELVREKIMRQLGAELPYQITVEIEEFKQQGRTLHIHALILVERDGQKKIIIGDKGDRIKRIGSDARRDMELLFDSKVMLNLWVKVKGGWSDDERALRSLGYGDL.

The region spanning 8–176 (RCGYVAIVGR…ESLIASHLPE (169 aa)) is the Era-type G domain. The segment at 16 to 23 (GRPNVGKS) is G1. 16 to 23 (GRPNVGKS) serves as a coordination point for GTP. The G2 stretch occupies residues 42–46 (QTTRH). Residues 63–66 (DTPG) are G3. GTP-binding positions include 63 to 67 (DTPGM) and 125 to 128 (NKTD). Residues 125–128 (NKTD) are G4. The segment at 155–157 (ISA) is G5. In terms of domain architecture, KH type-2 spans 199–283 (VREKIMRQLG…MLNLWVKVKG (85 aa)).

The protein belongs to the TRAFAC class TrmE-Era-EngA-EngB-Septin-like GTPase superfamily. Era GTPase family. Monomer.

The protein localises to the cytoplasm. Its subcellular location is the cell inner membrane. Functionally, an essential GTPase that binds both GDP and GTP, with rapid nucleotide exchange. Plays a role in 16S rRNA processing and 30S ribosomal subunit biogenesis and possibly also in cell cycle regulation and energy metabolism. In Pseudomonas savastanoi pv. phaseolicola (strain 1448A / Race 6) (Pseudomonas syringae pv. phaseolicola (strain 1448A / Race 6)), this protein is GTPase Era.